Reading from the N-terminus, the 362-residue chain is Histidinol-phosphate aminotransferase (362 aa).

At K211 the chain carries N6-(pyridoxal phosphate)lysine.

Belongs to the class-II pyridoxal-phosphate-dependent aminotransferase family. Histidinol-phosphate aminotransferase subfamily. Homodimer. It depends on pyridoxal 5'-phosphate as a cofactor.

The enzyme catalyses L-histidinol phosphate + 2-oxoglutarate = 3-(imidazol-4-yl)-2-oxopropyl phosphate + L-glutamate. It participates in amino-acid biosynthesis; L-histidine biosynthesis; L-histidine from 5-phospho-alpha-D-ribose 1-diphosphate: step 7/9. This is Histidinol-phosphate aminotransferase from Serratia proteamaculans (strain 568).